We begin with the raw amino-acid sequence, 509 residues long: 4-aminobutyrate aminotransferase (509 aa).

166-167 lines the pyridoxal 5'-phosphate pocket; that stretch reads GS. Arg223 provides a ligand contact to substrate. Lys363 carries the N6-(pyridoxal phosphate)lysine modification. Pyridoxal 5'-phosphate is bound at residue Thr387.

Belongs to the class-III pyridoxal-phosphate-dependent aminotransferase family. Homodimer. Pyridoxal 5'-phosphate serves as cofactor.

It localises to the cytoplasm. It carries out the reaction 4-aminobutanoate + 2-oxoglutarate = succinate semialdehyde + L-glutamate. Deaminates gamma-aminobutyric acid (GABA) to succinate-semialdehyde, which in turn is converted to succinate by the succinate semialdehyde dehydrogenase. Not required for the utilization of GABA as nitrogen source. The sequence is that of 4-aminobutyrate aminotransferase (GATA) from Mycosarcoma maydis (Corn smut fungus).